A 377-amino-acid chain; its full sequence is Glutamate 5-kinase (377 aa).

Residue lysine 20 coordinates ATP. The substrate site is built by serine 60, aspartate 147, and asparagine 159. An ATP-binding site is contributed by 179–180 (TD). Residues 285 to 363 (AGRLVIDDGA…DKVYQVLGEA (79 aa)) enclose the PUA domain.

Belongs to the glutamate 5-kinase family.

Its subcellular location is the cytoplasm. It catalyses the reaction L-glutamate + ATP = L-glutamyl 5-phosphate + ADP. It functions in the pathway amino-acid biosynthesis; L-proline biosynthesis; L-glutamate 5-semialdehyde from L-glutamate: step 1/2. Catalyzes the transfer of a phosphate group to glutamate to form L-glutamate 5-phosphate. The chain is Glutamate 5-kinase from Acinetobacter baumannii (strain AB307-0294).